Reading from the N-terminus, the 66-residue chain is Cytochrome b-c1 complex subunit 9, mitochondrial (66 aa).

Residues 2–17 (SFSSLYKTFFKRNAVF) lie on the Mitochondrial matrix side of the membrane. Residues 18–43 (VGTIFAGAFVFQTVFDTAITSWYENH) form a helical membrane-spanning segment. Over 44 to 66 (NKGKLWKDVKARIAAGDGDDDDE) the chain is Mitochondrial intermembrane.

The protein belongs to the UQCR10/QCR9 family. In terms of assembly, component of the ubiquinol-cytochrome c oxidoreductase (cytochrome b-c1 complex, complex III, CIII), a multisubunit enzyme composed of 10 subunits. The complex is composed of 3 respiratory subunits cytochrome b (COB), cytochrome c1 (CYT1) and Rieske protein (RIP1), 2 core protein subunits COR1 and QCR2, and 5 low-molecular weight protein subunits QCR6, QCR7, QCR8, QCR9 and QCR10. The complex exists as an obligatory dimer and forms supercomplexes (SCs) in the inner mitochondrial membrane with a monomer or a dimer of cytochrome c oxidase (complex IV, CIV), resulting in 2 different assemblies (supercomplexes III(2)IV and III(2)IV(2)). Interacts with the transmembrane segment of RIP1.

Its subcellular location is the mitochondrion inner membrane. Component of the ubiquinol-cytochrome c oxidoreductase, a multisubunit transmembrane complex that is part of the mitochondrial electron transport chain which drives oxidative phosphorylation. The respiratory chain contains 3 multisubunit complexes succinate dehydrogenase (complex II, CII), ubiquinol-cytochrome c oxidoreductase (cytochrome b-c1 complex, complex III, CIII) and cytochrome c oxidase (complex IV, CIV), that cooperate to transfer electrons derived from NADH and succinate to molecular oxygen, creating an electrochemical gradient over the inner membrane that drives transmembrane transport and the ATP synthase. The cytochrome b-c1 complex catalyzes electron transfer from ubiquinol to cytochrome c, linking this redox reaction to translocation of protons across the mitochondrial inner membrane, with protons being carried across the membrane as hydrogens on the quinol. In the process called Q cycle, 2 protons are consumed from the matrix, 4 protons are released into the intermembrane space and 2 electrons are passed to cytochrome c. This is Cytochrome b-c1 complex subunit 9, mitochondrial (QCR9) from Saccharomyces cerevisiae (strain ATCC 204508 / S288c) (Baker's yeast).